Here is a 368-residue protein sequence, read N- to C-terminus: Zinc finger protein 24 (368 aa).

Lys-22 participates in a covalent cross-link: Glycyl lysine isopeptide (Lys-Gly) (interchain with G-Cter in SUMO2). A Glycyl lysine isopeptide (Lys-Gly) (interchain with G-Cter in SUMO1); alternate cross-link involves residue Lys-27. Lys-27 is covalently cross-linked (Glycyl lysine isopeptide (Lys-Gly) (interchain with G-Cter in SUMO2); alternate). In terms of domain architecture, SCAN box spans 52–134 (RQRFRQFGYQ…TVLEDLESEL (83 aa)). 2 positions are modified to phosphoserine: Ser-132 and Ser-142. Residues Lys-147, Lys-177, and Lys-236 each participate in a glycyl lysine isopeptide (Lys-Gly) (interchain with G-Cter in SUMO2) cross-link. The C2H2-type 1 zinc finger occupies 251–273 (HICDECGKHFSQGSALILHQRIH). A necessary and sufficient for nuclear localization region spans residues 251 to 301 (HICDECGKHFSQGSALILHQRIHSGEKPYGCVECGKAFSRSSILVQHQRVH). Position 274 is a phosphoserine (Ser-274). Residues Lys-277 and Lys-286 each participate in a glycyl lysine isopeptide (Lys-Gly) (interchain with G-Cter in SUMO2) cross-link. 3 consecutive C2H2-type zinc fingers follow at residues 279 to 301 (YGCV…QRVH), 307 to 329 (YKCL…QRIH), and 335 to 357 (YECV…QRRH). Ser-292 carries the post-translational modification Phosphoserine. Phosphotyrosine is present on Tyr-335. Glycyl lysine isopeptide (Lys-Gly) (interchain with G-Cter in SUMO2) cross-links involve residues Lys-361 and Lys-367.

The protein belongs to the krueppel C2H2-type zinc-finger protein family. Post-translationally, sumoylated. In terms of tissue distribution, expressed in many tissues except in heart.

The protein localises to the nucleus. Functionally, transcription factor required for myelination of differentiated oligodendrocytes. Required for the conversion of oligodendrocytes from the premyelinating to the myelinating state. In the developing central nervous system (CNS), involved in the maintenance in the progenitor stage by promoting the cell cycle. Specifically binds to the 5'-TCAT-3' DNA sequence. Has transcription repressor activity in vitro. This Homo sapiens (Human) protein is Zinc finger protein 24 (ZNF24).